A 363-amino-acid polypeptide reads, in one-letter code: Probable mannitol dehydrogenase 3 (363 aa).

7 residues coordinate Zn(2+): Cys-51, His-73, Cys-104, Cys-107, Cys-110, Cys-118, and Cys-168.

It belongs to the zinc-containing alcohol dehydrogenase family. It depends on Zn(2+) as a cofactor.

It catalyses the reaction D-mannitol + NAD(+) = D-mannose + NADH + H(+). Its function is as follows. Oxidizes mannitol to mannose. Provides the initial step by which translocated mannitol is committed to central metabolism and, by regulating mannitol pool size, is important in regulating salt tolerance at the cellular level. The sequence is that of Probable mannitol dehydrogenase 3 (CAD3) from Stylosanthes humilis (Townsville stylo).